A 377-amino-acid polypeptide reads, in one-letter code: UDP-N-acetylglucosamine--N-acetylmuramyl-(pentapeptide) pyrophosphoryl-undecaprenol N-acetylglucosamine transferase (377 aa).

UDP-N-acetyl-alpha-D-glucosamine contacts are provided by residues 11–13, Asn123, Arg164, Ser194, and Gln295; that span reads TGG.

Belongs to the glycosyltransferase 28 family. MurG subfamily.

The protein localises to the cell inner membrane. The enzyme catalyses di-trans,octa-cis-undecaprenyl diphospho-N-acetyl-alpha-D-muramoyl-L-alanyl-D-glutamyl-meso-2,6-diaminopimeloyl-D-alanyl-D-alanine + UDP-N-acetyl-alpha-D-glucosamine = di-trans,octa-cis-undecaprenyl diphospho-[N-acetyl-alpha-D-glucosaminyl-(1-&gt;4)]-N-acetyl-alpha-D-muramoyl-L-alanyl-D-glutamyl-meso-2,6-diaminopimeloyl-D-alanyl-D-alanine + UDP + H(+). Its pathway is cell wall biogenesis; peptidoglycan biosynthesis. Its function is as follows. Cell wall formation. Catalyzes the transfer of a GlcNAc subunit on undecaprenyl-pyrophosphoryl-MurNAc-pentapeptide (lipid intermediate I) to form undecaprenyl-pyrophosphoryl-MurNAc-(pentapeptide)GlcNAc (lipid intermediate II). The polypeptide is UDP-N-acetylglucosamine--N-acetylmuramyl-(pentapeptide) pyrophosphoryl-undecaprenol N-acetylglucosamine transferase (Opitutus terrae (strain DSM 11246 / JCM 15787 / PB90-1)).